Consider the following 86-residue polypeptide: Cardiotoxin homolog TA-ctx-like (86 aa).

Positions 1-21 are cleaved as a signal peptide; that stretch reads MKTLLLTLVVLTIACLDLGYT. Cystine bridges form between C24/C45, C38/C62, C66/C78, and C79/C84.

The protein belongs to the three-finger toxin family. Short-chain subfamily. Orphan group IX sub-subfamily. Expressed by the venom gland.

It is found in the secreted. The protein is Cardiotoxin homolog TA-ctx-like of Bungarus multicinctus (Many-banded krait).